The sequence spans 29 residues: Kappa-theraphotoxin-Ps1a (29 aa).

Intrachain disulfides connect C2–C16, C9–C21, and C15–C25. I29 carries the isoleucine amide modification.

The protein belongs to the neurotoxin 30 (phrixotoxin) family. In terms of tissue distribution, expressed by the venom gland.

Its subcellular location is the secreted. In terms of biological role, potent and specific blocker of Kv4.2/KCND2 (IC(50)=5 nM) and Kv4.3/KCND3 (IC(50)=28 nM) potassium channels. Acts by altering the gating properties of these channels. Also shows moderate inhibition on human voltage-gated sodium channel Nav1.7/SCN9A activation (IC(50)=423 nM). The sequence is that of Kappa-theraphotoxin-Ps1a from Paraphysa scrofa (Chilean copper tarantula).